The sequence spans 347 residues: Putative histone PARylation factor 1-like (347 aa).

N-acetylmethionine is present on Met-1. An N6-acetyllysine mark is found at Lys-187 and Lys-234.

Belongs to the HPF1 family.

This chain is Putative histone PARylation factor 1-like, found in Homo sapiens (Human).